The chain runs to 421 residues: MVDLKRLRQEPEVFHRAIREKGVALDLEALLALDREVQELKKRLQEVQTERNQVAKRVPKAPPEEKEALIARGKALGEEAKRLEEALREKEARLEALLLQVPLPPWPGAPVGGEEANREIKRVGGPPEFSFPPLDHVALMEKNGWWEPRISQVSGSRSYALKGDLALYELALLRFAMDFMARRGFLPMTLPSYAREKAFLGTGHFPAYRDQVWAIAETDLYLTGTAEVVLNALHSGEILPYEALPLRYAGYAPAFRSEAGSFGKDVRGLMRVHQFHKVEQYVLTEASLEASDRAFQELLENAEEILRLLELPYRLVEVATGDMGPGKWRQVDIEVYLPSEGRYRETHSCSALLDWQARRANLRYRDPEGRVRYAYTLNNTALATPRILAMLLENHQLQDGRVRVPQALIPYMGKEVLEPCG.

225 to 227 is an L-serine binding site; it reads TAE. ATP-binding positions include 256–258 and V272; that span reads RSE. E279 serves as a coordination point for L-serine. 345–348 contacts ATP; it reads ETHS. T380 serves as a coordination point for L-serine.

This sequence belongs to the class-II aminoacyl-tRNA synthetase family. Type-1 seryl-tRNA synthetase subfamily. In terms of assembly, homodimer. A single tRNA molecule binds across the dimer.

Its subcellular location is the cytoplasm. It carries out the reaction tRNA(Ser) + L-serine + ATP = L-seryl-tRNA(Ser) + AMP + diphosphate + H(+). It catalyses the reaction tRNA(Sec) + L-serine + ATP = L-seryl-tRNA(Sec) + AMP + diphosphate + H(+). Its pathway is aminoacyl-tRNA biosynthesis; selenocysteinyl-tRNA(Sec) biosynthesis; L-seryl-tRNA(Sec) from L-serine and tRNA(Sec): step 1/1. Functionally, catalyzes the attachment of serine to tRNA(Ser). Is also probably able to aminoacylate tRNA(Sec) with serine, to form the misacylated tRNA L-seryl-tRNA(Sec), which will be further converted into selenocysteinyl-tRNA(Sec). This is Serine--tRNA ligase (serS) from Thermus thermophilus (strain ATCC BAA-163 / DSM 7039 / HB27).